The chain runs to 380 residues: Cyclohexane-1-carbonyl-CoA dehydrogenase (380 aa).

It belongs to the acyl-CoA dehydrogenase family. Homotetramer. It depends on FAD as a cofactor.

It carries out the reaction cyclohexane-1-carbonyl-CoA + oxidized [electron-transfer flavoprotein] + H(+) = cyclohex-1-ene-1-carbonyl-CoA + reduced [electron-transfer flavoprotein]. Its function is as follows. Acyl-CoA dehydrogenase involved in the anaerobic degradation of cyclohexane carboxylic acid (CHC). Catalyzes the 1,2-dehydrogenation of cyclohexane-1-carbonyl-CoA (CHCoA) to cyclohex-1-ene-1-carbonyl-CoA (CHeneCoA). An alternative substrate, cyclohex-3-ene-1-carboxyl-CoA can be converted to the corresponding cyclohexadiene-1-carboxyl-CoA isomers (30% rate compared to CHC). In Geobacter metallireducens (strain ATCC 53774 / DSM 7210 / GS-15), this protein is Cyclohexane-1-carbonyl-CoA dehydrogenase.